Here is a 540-residue protein sequence, read N- to C-terminus: MQGDWVLLLLLGLRIHLSFGVIPVEEENPVFWNQKAKEALDVAKKLQPIQTSAKNLILFLGDGMGVPTVTATRILKGQLGGHLGPETPLAMDHFPFTALSKTYNVDRQVPDSAGTATAYLCGVKANYKTIGVSAAARFNQCNSTFGNEVFSVMHRAKKAGKSVGVVTTTRVQHASPAGTYAHTVNRDWYSDADMPSSALQEGCKDIATQLISNMDIDVILGGGRKFMFPKGTPDPEYPGDSDQSGVRLDSRNLVEEWLAKYQGTRYVWNREQLMQASQDPAVTRLMGLFEPTEMKYDVNRNASADPSLAEMTEVAVRLLSRNPQGFYLFVEGGRIDQGHHAGTAYLALTEAVMFDSAIEKASQLTNEKDTLTLITADHSHVFAFGGYTLRGTSIFGLAPLNAQDGKSYTSILYGNGPGYVLNSGNRPNVTDAESGDVNYKQQAAVPLSSETHGGEDVAIFARGPQAHLVHGVQEQNYIAHVMAFAGCLEPYTDCGLAPPADENRPTTPVQNSAITMNNVLLSLQLLVSMLLLVGTALVVS.

Residues 1–20 (MQGDWVLLLLLGLRIHLSFG) form the signal peptide. Mg(2+) is bound at residue D62. 2 residues coordinate Zn(2+): D62 and S112. The active-site Phosphoserine intermediate is S112. A disulfide bond links C141 and C203. A glycan (N-linked (GlcNAc...) asparagine) is linked at N142. Residue S175 participates in Mg(2+) binding. E236, F289, and E290 together coordinate Ca(2+). N-linked (GlcNAc...) asparagine glycosylation is present at N301. A Ca(2+)-binding site is contributed by D305. E331 is a binding site for Mg(2+). Residues D336, H340, D377, and H378 each contribute to the Zn(2+) site. N428 is a glycosylation site (N-linked (GlcNAc...) asparagine). H452 is a Zn(2+) binding site. C487 and C494 are oxidised to a cystine. N511 carries the GPI-anchor amidated asparagine lipid modification. Residues 512–540 (SAITMNNVLLSLQLLVSMLLLVGTALVVS) constitute a propeptide, removed in mature form.

This sequence belongs to the alkaline phosphatase family. In terms of assembly, homodimer. It depends on Mg(2+) as a cofactor. Requires Zn(2+) as cofactor. The cofactor is Ca(2+).

Its subcellular location is the cell membrane. It catalyses the reaction a phosphate monoester + H2O = an alcohol + phosphate. Its function is as follows. Alkaline phosphatase that can hydrolyze various phosphate compounds. This is Intestinal-type alkaline phosphatase 1 (Alpi) from Rattus norvegicus (Rat).